Here is a 634-residue protein sequence, read N- to C-terminus: Glutamyl-tRNA(Gln) amidotransferase subunit E (634 aa).

Belongs to the GatB/GatE family. GatE subfamily. As to quaternary structure, heterodimer of GatD and GatE.

It carries out the reaction L-glutamyl-tRNA(Gln) + L-glutamine + ATP + H2O = L-glutaminyl-tRNA(Gln) + L-glutamate + ADP + phosphate + H(+). In terms of biological role, allows the formation of correctly charged Gln-tRNA(Gln) through the transamidation of misacylated Glu-tRNA(Gln) in organisms which lack glutaminyl-tRNA synthetase. The reaction takes place in the presence of glutamine and ATP through an activated gamma-phospho-Glu-tRNA(Gln). The GatDE system is specific for glutamate and does not act on aspartate. This chain is Glutamyl-tRNA(Gln) amidotransferase subunit E, found in Sulfolobus acidocaldarius (strain ATCC 33909 / DSM 639 / JCM 8929 / NBRC 15157 / NCIMB 11770).